Here is a 353-residue protein sequence, read N- to C-terminus: Carbamoyl phosphate synthase arginine-specific small chain (353 aa).

Positions 1-162 (MEGYLVLEDG…EISTFGDGNK (162 aa)) are CPSase. L-glutamine is bound by residues S44, G210, and G212. Residues 163 to 349 (HIALIDFGYK…LKNVIPARRE (187 aa)) enclose the Glutamine amidotransferase type-1 domain. C237 serves as the catalytic Nucleophile. The L-glutamine site is built by L238, Q241, N279, and Y282. Active-site residues include H322 and E324.

The protein belongs to the CarA family. Composed of two chains; the small (or glutamine) chain promotes the hydrolysis of glutamine to ammonia, which is used by the large (or ammonia) chain to synthesize carbamoyl phosphate. Tetramer of heterodimers (alpha,beta)4.

It catalyses the reaction hydrogencarbonate + L-glutamine + 2 ATP + H2O = carbamoyl phosphate + L-glutamate + 2 ADP + phosphate + 2 H(+). It carries out the reaction L-glutamine + H2O = L-glutamate + NH4(+). The protein operates within amino-acid biosynthesis; L-arginine biosynthesis; carbamoyl phosphate from bicarbonate: step 1/1. In terms of biological role, small subunit of the glutamine-dependent carbamoyl phosphate synthetase (CPSase). CPSase catalyzes the formation of carbamoyl phosphate from the ammonia moiety of glutamine, carbonate, and phosphate donated by ATP, constituting the first step of the biosynthetic pathway leading to arginine and/or urea. The small subunit (glutamine amidotransferase) binds and cleaves glutamine to supply the large subunit with the substrate ammonia. The chain is Carbamoyl phosphate synthase arginine-specific small chain from Bacillus subtilis (strain 168).